Consider the following 359-residue polypeptide: Oplophorus-luciferin 2-monooxygenase non-catalytic subunit (359 aa).

Residues 1–39 (MAVNFKFSLLTITIVVNILVYCNASAIKFDVDLEKVPSN) form the signal peptide. LRR repeat units lie at residues 135-158 (AATL…EMSQ), 160-180 (TKLN…ALSS), 181-203 (DTLA…AFQT), 228-251 (SPKL…AIKL), 255-278 (GPTT…AVEG), 280-300 (QGIL…VWRP), 302-325 (LENL…MWLI), and 331-356 (LAKI…VFHA).

In terms of assembly, heterotetramer of a catalytic 19 kDa and a non-catalytic 35 kDa subunit.

The protein resides in the secreted. Non-catalytic subunit of oplophorus-luciferin 2-monooxygenase. May stabilize the active conformation of the catalytic subunit. The polypeptide is Oplophorus-luciferin 2-monooxygenase non-catalytic subunit (Oplophorus gracilirostris (Luminous shrimp)).